Reading from the N-terminus, the 674-residue chain is UvrABC system protein B (674 aa).

One can recognise a Helicase ATP-binding domain in the interval 26–414 (EGLDSGLAHQ…SGNDIAEQVV (389 aa)). An ATP-binding site is contributed by 39–46 (GVTGSGKT). Positions 92–115 (YYDYYQPEAYVPTTDTFIEKDASV) match the Beta-hairpin motif. Positions 432–586 (QVDDLLSEIR…ALHNKKNGIT (155 aa)) constitute a Helicase C-terminal domain. The UVR domain occupies 634–669 (ELEIQRLETEMYDLAQNLEFEKAAEARDKIHTLRQQ).

Belongs to the UvrB family. Forms a heterotetramer with UvrA during the search for lesions. Interacts with UvrC in an incision complex.

Its subcellular location is the cytoplasm. Its function is as follows. The UvrABC repair system catalyzes the recognition and processing of DNA lesions. A damage recognition complex composed of 2 UvrA and 2 UvrB subunits scans DNA for abnormalities. Upon binding of the UvrA(2)B(2) complex to a putative damaged site, the DNA wraps around one UvrB monomer. DNA wrap is dependent on ATP binding by UvrB and probably causes local melting of the DNA helix, facilitating insertion of UvrB beta-hairpin between the DNA strands. Then UvrB probes one DNA strand for the presence of a lesion. If a lesion is found the UvrA subunits dissociate and the UvrB-DNA preincision complex is formed. This complex is subsequently bound by UvrC and the second UvrB is released. If no lesion is found, the DNA wraps around the other UvrB subunit that will check the other stand for damage. The protein is UvrABC system protein B of Photobacterium profundum (strain SS9).